We begin with the raw amino-acid sequence, 103 residues long: Cell division protein FtsB (103 aa).

Over 1–3 (MGK) the chain is Cytoplasmic. A helical transmembrane segment spans residues 4–21 (LTLLLLAILVWLQYSLWF). The Periplasmic portion of the chain corresponds to 22 to 103 (GKNGIHDYTR…RAQSAGQNNR (82 aa)). Positions 31 to 71 (RVNNDVAAQQATNAKLKARNDQLFAEIDDLNGGQEALEERA) form a coiled coil.

The protein belongs to the FtsB family. In terms of assembly, part of a complex composed of FtsB, FtsL and FtsQ.

Its subcellular location is the cell inner membrane. Functionally, essential cell division protein. May link together the upstream cell division proteins, which are predominantly cytoplasmic, with the downstream cell division proteins, which are predominantly periplasmic. The chain is Cell division protein FtsB from Escherichia coli O81 (strain ED1a).